Reading from the N-terminus, the 394-residue chain is Phosphopentomutase (394 aa).

Residues Asp14, Asp287, His292, Asp328, His329, and His340 each contribute to the Mn(2+) site.

This sequence belongs to the phosphopentomutase family. Mn(2+) is required as a cofactor.

It localises to the cytoplasm. The enzyme catalyses 2-deoxy-alpha-D-ribose 1-phosphate = 2-deoxy-D-ribose 5-phosphate. It catalyses the reaction alpha-D-ribose 1-phosphate = D-ribose 5-phosphate. The protein operates within carbohydrate degradation; 2-deoxy-D-ribose 1-phosphate degradation; D-glyceraldehyde 3-phosphate and acetaldehyde from 2-deoxy-alpha-D-ribose 1-phosphate: step 1/2. Isomerase that catalyzes the conversion of deoxy-ribose 1-phosphate (dRib-1-P) and ribose 1-phosphate (Rib-1-P) to deoxy-ribose 5-phosphate (dRib-5-P) and ribose 5-phosphate (Rib-5-P), respectively. This chain is Phosphopentomutase, found in Listeria monocytogenes serotype 4a (strain HCC23).